The following is a 1363-amino-acid chain: Collagen alpha-2(I) chain (1363 aa).

The first 22 residues, 1 to 22, serve as a signal peptide directing secretion; it reads MLSFVDTRILLLLAVTSYLATS. Gln23 carries the post-translational modification Pyrrolidone carboxylic acid. The propeptide at 23 to 77 is N-terminal propeptide; it reads QHLFQASAGRKGPRGDKGPQGERGPPGPPGRDGEDGPPGPPGPPGPPGLGGNFAA. Residues 28–1110 form a disordered region; the sequence is ASAGRKGPRG…GPNGGGYEVG (1083 aa). Residues 59–69 show a composition bias toward pro residues; the sequence is PPGPPGPPGPP. Gln78 is modified (pyrrolidone carboxylic acid). At Lys83 the chain carries Allysine. Low complexity predominate over residues 88–97; sequence GPGPMGLMGP. Residues 98 to 110 are compositionally biased toward pro residues; that stretch reads RGPPGASGPPGPP. Residues 112-128 are compositionally biased toward low complexity; the sequence is FQGVPGEPGEPGQTGPQ. Residues 140-154 show a composition bias toward basic and acidic residues; the sequence is AGEDGHPGKPGRPGE. Lys176 bears the 5-hydroxylysine; alternate mark. Lys176 is a glycosylation site (O-linked (Gal...) hydroxylysine; alternate). Low complexity-rich tracts occupy residues 224 to 263 and 299 to 320; these read IGAPGPAGARGSDGSAGPTGPAGPIGAAGPPGFPGAPGAK and PGANGLPGAKGAAGLPGVAGAP. Over residues 322–335 the composition is skewed to pro residues; sequence LPGPRGIPGPPGPA. 4-hydroxyproline is present on residues Pro440 and Pro443. Composition is skewed to low complexity over residues 601–610 and 674–683; these read PAGPIGSRGP and RGLPGAIGAP. Positions 684–699 are enriched in gly residues; it reads GPAGGAGDRGEGGPAG. Residues 721-736 show a composition bias toward low complexity; that stretch reads PSGFAGPPGAAGQPGA. A compositionally biased stretch (basic and acidic residues) spans 737–746; the sequence is KGERGPKGPK. Low complexity-rich tracts occupy residues 748–794, 842–875, 898–931, 955–965, and 986–995; these read ETGP…AGRV, AGEKGPSGEAGAAGPPGTPGPQGILGAPGILGLP, VSGPPGARGPSGPVGSPGPNGAPGEAGRDGNPGN, PSGALGAPGPH, and VGPAGAFGPR. A compositionally biased stretch (basic and acidic residues) spans 1004-1015; the sequence is RGEKGEPGDKGH. The segment covering 1036 to 1049 has biased composition (low complexity); sequence QHGDQGPPGNNGPA. 2 stretches are compositionally biased toward pro residues: residues 1051–1060 and 1088–1102; these read PRGPPGPSGP and AGPPGPPGPPGPPGP. Residues 1118–1363 constitute a propeptide, C-terminal propeptide; sequence ADQPSLRPKD…GLHIGPVCFK (246 aa). The region spanning 1128–1363 is the Fibrillar collagen NC1 domain; the sequence is YEVDATLKTL…GLHIGPVCFK (236 aa). 3 disulfide bridges follow: Cys1158–Cys1190, Cys1198–Cys1361, and Cys1269–Cys1314. Ca(2+)-binding residues include Asp1176, Asn1178, Gln1179, Cys1181, and Asp1184. N-linked (GlcNAc...) asparagine glycosylation is present at Asn1264.

This sequence belongs to the fibrillar collagen family. Trimers of one alpha 2(I) and two alpha 1(I) chains. Prolines at the third position of the tripeptide repeating unit (G-X-Y) are hydroxylated in some or all of the chains. Post-translationally, the N-terminus of the mature protein is blocked. Forms the fibrils of tendon, ligaments and bones. In bones the fibrils are mineralized with calcium hydroxyapatite.

The protein localises to the secreted. It localises to the extracellular space. The protein resides in the extracellular matrix. In terms of biological role, type I collagen is a member of group I collagen (fibrillar forming collagen). The polypeptide is Collagen alpha-2(I) chain (COL1A2) (Gallus gallus (Chicken)).